The following is an 807-amino-acid chain: Glycerol-3-phosphate acyltransferase (807 aa).

Residues 305–310 (CHRSHM) carry the HXXXXD motif motif.

Belongs to the GPAT/DAPAT family.

It localises to the cell inner membrane. It catalyses the reaction sn-glycerol 3-phosphate + an acyl-CoA = a 1-acyl-sn-glycero-3-phosphate + CoA. The protein operates within phospholipid metabolism; CDP-diacylglycerol biosynthesis; CDP-diacylglycerol from sn-glycerol 3-phosphate: step 1/3. This is Glycerol-3-phosphate acyltransferase from Aliivibrio salmonicida (strain LFI1238) (Vibrio salmonicida (strain LFI1238)).